Reading from the N-terminus, the 135-residue chain is Small ribosomal subunit protein uS9 (135 aa).

Positions 107-118 are enriched in basic and acidic residues; sequence LVGDPRRTEPHK. Positions 107-135 are disordered; it reads LVGDPRRTEPHKPNRSTKGPRAKRQKSYR. Over residues 119–135 the composition is skewed to basic residues; the sequence is PNRSTKGPRAKRQKSYR.

The protein belongs to the universal ribosomal protein uS9 family. Part of the 30S ribosomal subunit.

The polypeptide is Small ribosomal subunit protein uS9 (Pyrococcus furiosus (strain ATCC 43587 / DSM 3638 / JCM 8422 / Vc1)).